We begin with the raw amino-acid sequence, 1215 residues long: Metabotropic glycine receptor (1215 aa).

The first 23 residues, Met-1–Gly-23, serve as a signal peptide directing secretion. The segment at Gly-23–Asp-66 is disordered. Topologically, residues Ala-24–Arg-417 are extracellular. The span at Pro-28–Pro-40 shows a compositional bias: basic and acidic residues. Residues Ala-52 to Ser-64 show a composition bias toward low complexity. A cache-like region region spans residues Tyr-85–Trp-281. N-linked (GlcNAc...) asparagine glycans are attached at residues Asn-98 and Asn-143. Cys-99 and Cys-272 are joined by a disulfide. Residues Ser-172 and Arg-173 each coordinate glycine. Asn-215 is a glycosylation site (N-linked (GlcNAc...) asparagine). A glycine-binding site is contributed by Glu-271. Asn-274 carries an N-linked (GlcNAc...) asparagine glycan. Glycine is bound at residue Asp-307. Residue Asn-333 is glycosylated (N-linked (GlcNAc...) asparagine). Residues Leu-418–Tyr-439 traverse the membrane as a helical segment. The Cytoplasmic portion of the chain corresponds to His-440–Gly-451. The chain crosses the membrane as a helical span at residues Leu-452–Phe-474. Residues Glu-475–Thr-478 are Extracellular-facing. A helical transmembrane segment spans residues Phe-479–Leu-501. The cysteines at positions 481 and 573 are disulfide-linked. The Cytoplasmic portion of the chain corresponds to Lys-502 to Arg-525. The chain crosses the membrane as a helical span at residues Val-526–Ser-547. Topologically, residues Val-548–Asp-576 are extracellular. The helical transmembrane segment at Arg-577–Cys-597 threads the bilayer. At Tyr-598–Arg-611 the chain is on the cytoplasmic side. Residues Tyr-612 to Val-633 traverse the membrane as a helical segment. Residues Leu-634 to Trp-642 are Extracellular-facing. Residues Met-643–Ile-664 traverse the membrane as a helical segment. Over Pro-665–Val-1215 the chain is Cytoplasmic. Residues Ser-694, Ser-705, and Ser-708 each carry the phosphoserine modification. A disordered region spans residues Arg-757 to Asp-999. Composition is skewed to basic and acidic residues over residues Cys-769–Thr-781 and Ser-819–Thr-828. Lys-774 is covalently cross-linked (Glycyl lysine isopeptide (Lys-Gly) (interchain with G-Cter in ubiquitin)). Ser-865 carries the phosphoserine modification. Residues Val-925–Arg-943 are compositionally biased toward basic and acidic residues. Ser-946 bears the Phosphoserine mark. The span at Gln-979 to Lys-998 shows a compositional bias: polar residues. Short sequence motifs (VCPWE motif) lie at residues Val-1006–Glu-1010 and Val-1071–Glu-1075. Ser-1080 is modified (phosphoserine). The segment at Ser-1117–Pro-1164 is disordered. Basic and acidic residues predominate over residues His-1139–Val-1151. Polar residues predominate over residues Gly-1153–Pro-1164. Positions Val-1171–Glu-1175 match the VCPWE motif 3 motif.

The protein belongs to the G-protein coupled receptor 3 family. In terms of assembly, homodimer. Associates with the RGS7-GNB5 complex, promoting its localization to the cell membrane and regulating its GTPase activator activity. Interacts (via VCPWE motifs) with GNAO1. Interacts with GPC4. Interacts with EGFLAM.

It is found in the cell membrane. The protein localises to the postsynaptic cell membrane. It localises to the presynaptic cell membrane. Its subcellular location is the nucleus. Its function is as follows. Metabotropic receptor for glycine that controls synapse formation and function in the brain. Acts as an atypical G-protein coupled receptor that recruits and regulates the RGS7-GNB5 complex instead of activating G proteins. In absence of glycine ligand, promotes the GTPase activator activity of RGS7, increasing the GTPase activity of G protein alpha subunits, thereby driving them into their inactive GDP-bound form. Glycine-binding changes the conformation of the intracellular surface, inhibiting the GTPase activator activity of the RGS7-GNB5 complex, promoting G protein alpha subunits into their active GTP-bound form and regulating cAMP levels. Also able to bind taurine, a compound closely related to glycine, but with a two-fold lower affinity. Glycine receptor-dependent regulation of cAMP controls key ion channels, kinases and neurotrophic factors involved in neuronal excitability and synaptic transmission. Plays a pivotal role in regulating mood and cognition via its ability to regulate neuronal excitability in L2/L3 pyramidal neurons of the prefrontal cortex. Also involved in spatial learning by regulating hippocampal CA1 neuronal excitability. Acts as a synaptic organizer in the hippocampus, required for proper mossy fiber-CA3 neurocircuitry establishment, structure and function: induces presynaptic differentiation in contacting axons via its interaction with GPC4. In addition to glycine, may also act as a receptor for osteocalcin (BGLAP) hormone: osteocalcin-binding initiates a signaling response that prevents neuronal apoptosis in the hippocampus and regulates the synthesis of neurotransmitters. The polypeptide is Metabotropic glycine receptor (Homo sapiens (Human)).